Here is a 93-residue protein sequence, read N- to C-terminus: YcgL domain-containing protein VFMJ11_1829 (93 aa).

The YcgL domain maps to 1–84; it reads MFCSIYKSTK…PPENLLEKYK (84 aa).

The sequence is that of YcgL domain-containing protein VFMJ11_1829 from Aliivibrio fischeri (strain MJ11) (Vibrio fischeri).